Here is a 147-residue protein sequence, read N- to C-terminus: Bis(5'-nucleosyl)-tetraphosphatase [asymmetrical] (147 aa).

A2 bears the N-acetylalanine mark. The Nudix hydrolase domain maps to A2–H139. The Nudix box motif lies at G43–G64.

This sequence belongs to the Nudix hydrolase family. A divalent metal cation serves as cofactor.

It catalyses the reaction P(1),P(4)-bis(5'-guanosyl) tetraphosphate + H2O = GMP + GTP + 2 H(+). The catalysed reaction is a 5'-end CoA-ribonucleoside in mRNA + H2O = a 5'-end phospho-adenosine-phospho-ribonucleoside in mRNA + (R)-4'-phosphopantetheine + 2 H(+). It carries out the reaction a 5'-end FAD-phospho-ribonucleoside in mRNA + H2O = a 5'-end phospho-adenosine-phospho-ribonucleoside in mRNA + FMN + 2 H(+). Functionally, catalyzes the asymmetric hydrolysis of diadenosine 5',5'''-P1,P4-tetraphosphate (Ap4A) to yield AMP and ATP. Exhibits decapping activity towards FAD-capped RNAs and dpCoA-capped RNAs in vitro. This is Bis(5'-nucleosyl)-tetraphosphatase [asymmetrical] (NUDT2) from Bos taurus (Bovine).